Reading from the N-terminus, the 141-residue chain is ATP synthase epsilon chain 1 (141 aa).

The protein belongs to the ATPase epsilon chain family. As to quaternary structure, F-type ATPases have 2 components, CF(1) - the catalytic core - and CF(0) - the membrane proton channel. CF(1) has five subunits: alpha(3), beta(3), gamma(1), delta(1), epsilon(1). CF(0) has three main subunits: a, b and c.

The protein resides in the cell inner membrane. Produces ATP from ADP in the presence of a proton gradient across the membrane. This Thiobacillus denitrificans (strain ATCC 25259 / T1) protein is ATP synthase epsilon chain 1.